We begin with the raw amino-acid sequence, 122 residues long: S-adenosylmethionine decarboxylase proenzyme (122 aa).

S63 (schiff-base intermediate with substrate; via pyruvic acid) is an active-site residue. S63 carries the post-translational modification Pyruvic acid (Ser); by autocatalysis. Catalysis depends on H68, which acts as the Proton acceptor; for processing activity. The active-site Proton donor; for catalytic activity is the C83.

The protein belongs to the prokaryotic AdoMetDC family. Type 1 subfamily. In terms of assembly, heterotetramer of two alpha and two beta chains arranged as a dimer of alpha/beta heterodimers. It depends on pyruvate as a cofactor. In terms of processing, is synthesized initially as an inactive proenzyme. Formation of the active enzyme involves a self-maturation process in which the active site pyruvoyl group is generated from an internal serine residue via an autocatalytic post-translational modification. Two non-identical subunits are generated from the proenzyme in this reaction, and the pyruvate is formed at the N-terminus of the alpha chain, which is derived from the carboxyl end of the proenzyme. The post-translation cleavage follows an unusual pathway, termed non-hydrolytic serinolysis, in which the side chain hydroxyl group of the serine supplies its oxygen atom to form the C-terminus of the beta chain, while the remainder of the serine residue undergoes an oxidative deamination to produce ammonia and the pyruvoyl group blocking the N-terminus of the alpha chain.

It catalyses the reaction S-adenosyl-L-methionine + H(+) = S-adenosyl 3-(methylsulfanyl)propylamine + CO2. Its pathway is amine and polyamine biosynthesis; S-adenosylmethioninamine biosynthesis; S-adenosylmethioninamine from S-adenosyl-L-methionine: step 1/1. Catalyzes the decarboxylation of S-adenosylmethionine to S-adenosylmethioninamine (dcAdoMet), the propylamine donor required for the synthesis of the polyamines spermine and spermidine from the diamine putrescine. The protein is S-adenosylmethionine decarboxylase proenzyme of Methanococcus vannielii (strain ATCC 35089 / DSM 1224 / JCM 13029 / OCM 148 / SB).